Here is a 168-residue protein sequence, read N- to C-terminus: Endoribonuclease YbeY (168 aa).

His-126, His-130, and His-136 together coordinate Zn(2+).

Belongs to the endoribonuclease YbeY family. It depends on Zn(2+) as a cofactor.

Its subcellular location is the cytoplasm. Single strand-specific metallo-endoribonuclease involved in late-stage 70S ribosome quality control and in maturation of the 3' terminus of the 16S rRNA. The protein is Endoribonuclease YbeY of Sinorhizobium medicae (strain WSM419) (Ensifer medicae).